Reading from the N-terminus, the 359-residue chain is Methyltransferase fsa4 (359 aa).

S-adenosyl-L-methionine-binding positions include 198–199 (GG), Asp-224, 248–249 (SF), Arg-264, and Arg-265.

Belongs to the class I-like SAM-binding methyltransferase superfamily. Cation-independent O-methyltransferase family.

The protein operates within mycotoxin biosynthesis. Functionally, methyltransferase; part of the gene cluster that mediates the biosynthesis of HIV-1 integrase inhibitor equisetin and of fusarisetin A, both trans-fused decalin-containing tetramic acids showing also antimicrobial activity. The PKS module of fsa1 together with the enoylreductase fsa3 catalyze the formation of the polyketide unit which is then conjugated to L-serine by the condensation domain of the fsa1 NRPS module. Activity of the Dieckmann cyclase domain (RED) results in release of the Dieckmann product intermediate. Diels-Alderase fsa2 is involved in endo-selective Diels-Alder cycloaddition to form the decalin ring, leading to the production of N-desmethylequisetin also called trichosetin. Subsequent N-methylation is carried out by fsa4 to give equisetin. The enzymatic gene responsible for the conversion of equisetin to fusarisetin A has not been identified yet and is probably located outside of the fsa cluster. This Fusarium sp. (strain FN080326) protein is Methyltransferase fsa4.